We begin with the raw amino-acid sequence, 319 residues long: F-box only protein 8 (319 aa).

An F-box domain is found at 68 to 111 (FINLEMLPPELSFTILSYLNATDLCLASCVWQDLANDELLWQGL). The SEC7 domain maps to 146–276 (FNANPDEGVN…LILLSIDLTS (131 aa)).

May promote guanine-nucleotide exchange on an ARF. Promotes the activation of ARF through replacement of GDP with GTP (Potential). The polypeptide is F-box only protein 8 (FBXO8) (Homo sapiens (Human)).